Reading from the N-terminus, the 265-residue chain is MKRLLVTGAAGQLGRVMRERLAPMAEILRLADLSPLDPAGPNEECVQCDLADANAVNAMVAGCDGIVHLGGISVEKPFEQILQGNIIGLYNLYEAARAHGQPRIVFASSNHTIGYYPQTERLGPDVPARPDGLYGVSKCFGENLARMYFDKFGQETALVRIGSCTPEPNNYRMLSTWFSHDDFVSLIEAVFRAPVLGCPVVWGASANDAGWWDNSHLGFLGWKPKDNAEAFRRHITETTPPPDPNDALVRFQGGTFVDNPIFKQS.

Residues 12 to 13, 32 to 34, 49 to 50, and 69 to 73 each bind NAD(+); these read QL, DLS, DL, and LGGIS. Substrate is bound by residues Ser-73 and 109–111; that span reads SNH. The active-site Proton acceptor is the Tyr-134. Lys-138 contributes to the NAD(+) binding site. A substrate-binding site is contributed by Ser-163. Cys-164 is a binding site for NAD(+). Arg-172 is a binding site for substrate.

The protein belongs to the NAD(P)-dependent epimerase/dehydratase family. As to quaternary structure, homohexamer.

The enzyme catalyses beta-D-galacturonate + NAD(+) = D-galactaro-1,5-lactone + NADH + H(+). It catalyses the reaction beta-D-glucuronate + NAD(+) = D-glucaro-1,5-lactone + NADH + H(+). It participates in carbohydrate acid metabolism; D-galacturonate degradation via prokaryotic oxidative pathway. Functionally, catalyzes the oxidation of D-galacturonate and D-glucuronate to galactarate and D-glucarate, respectively. In fact, in water solution the substrate D-galacturonate is predominantly in pyranosic form whose beta anomer is converted by the enzyme to D-galactaro-1,5-lactone; in solution, this reaction product rearranges to the more stable D-galactaro-1,4-lactone. Makes part of the oxidative degradation pathway of D-galacturonate, which allows A.tumefaciens to utilize D-galacturonate as a sole carbon source. Cannot use NADP(+) instead of NAD(+) as cosubstrate. Is not active on D-galactose, D-glucose, D-galactonate and D-gluconate. The polypeptide is Uronate dehydrogenase (udh) (Agrobacterium fabrum (strain C58 / ATCC 33970) (Agrobacterium tumefaciens (strain C58))).